The following is a 414-amino-acid chain: Serine/threonine transporter SstT (414 aa).

The next 8 helical transmembrane spans lie at 16–36 (GSLVKQILVGLILGILLAWIS), 46–66 (LGTLFVGALKAVAPVLVLMLV), 84–104 (ILFLYLLGTFSAALAAVVFSF), 143–163 (ALLNANYIGILVWAVGLGFAL), 180–200 (AVTFMVKLVIRFAPVGIFGLV), 219–239 (LVVLIGCMLLVALVVNPLLVF), 300–320 (MAGAAITITVLTLAAVHTLGV), and 332–352 (VVASLCACGASGVAGGSLLLI).

The protein belongs to the dicarboxylate/amino acid:cation symporter (DAACS) (TC 2.A.23) family.

The protein localises to the cell inner membrane. It catalyses the reaction L-serine(in) + Na(+)(in) = L-serine(out) + Na(+)(out). It carries out the reaction L-threonine(in) + Na(+)(in) = L-threonine(out) + Na(+)(out). Functionally, involved in the import of serine and threonine into the cell, with the concomitant import of sodium (symport system). The protein is Serine/threonine transporter SstT of Salmonella dublin (strain CT_02021853).